We begin with the raw amino-acid sequence, 2067 residues long: Negative regulator of mitosis (2067 aa).

The segment covering 100 to 118 has biased composition (polar residues); it reads SLAIPQTTSQQSNRPSGSE. 3 disordered regions span residues 100 to 132, 332 to 408, and 452 to 480; these read SLAI…STSK, ESIP…DDFA, and GSQS…GFNP. Positions 336–347 match the Nuclear localization signal motif; sequence SHRKKKRRDTGG. Residues 336 to 355 show a composition bias toward basic residues; that stretch reads SHRKKKRRDTGGTRSKRRSS. Over residues 384 to 396 the composition is skewed to polar residues; it reads WNASVMSHSQYST. PC repeat units follow at residues 1434 to 1465, 1482 to 1520, 1532 to 1562, and 1625 to 1659; these read AGIM…ADQE, AAGF…TKNV, GATI…TVRF, and GLCF…ISRL. The tract at residues 2020 to 2042 is disordered; it reads FPSESDEEKRDRQETGSMPSSGH.

This sequence belongs to the APC1 family.

Its function is as follows. Negative regulator of mitosis in E.nidulans. This protein is part of a regulatory pathway that includes the nimA protein kinase. It is required to prevent premature entry into mitosis. Mutations to this protein both cause cells to enter mitosis and prevent them from leaving mitosis. This Emericella nidulans (strain FGSC A4 / ATCC 38163 / CBS 112.46 / NRRL 194 / M139) (Aspergillus nidulans) protein is Negative regulator of mitosis (bimE).